The following is a 107-amino-acid chain: Circadian clock oscillator protein KaiB (107 aa).

The protein belongs to the KaiB family. As to quaternary structure, may undergo a major conformational rearrangment; in the free state forms homooligomers. When bound to KaiC switches to a monomeric thioredoxin-fold (KaiB(fs)). The active oscillator complex is probably KaiC(6):KaiB(6).

Its function is as follows. Component of the KaiBC clock protein complex, which constitutes the main circadian regulator in cyanobacteria; it may modify the ATPase activity of KaiC. Does not stimulate dephosphorylation of endogenous KaiC, although it does stimulate dephosphorylation of KiaC from S.elongatus strain PCC 7942. Reduces the ATPase activity of KaiC by about half in vitro, which may be its function in vivo. Functionally, may be a metamorphic protein which reversibly switches between an inactive tetrameric fold and a rare, thioredoxin-like monomeric fold (KaiB(fs)). KaiB(fs) binds phospho-KaiC, and perhaps clock output effectors. This chain is Circadian clock oscillator protein KaiB, found in Prochlorococcus marinus subsp. pastoris (strain CCMP1986 / NIES-2087 / MED4).